Here is a 464-residue protein sequence, read N- to C-terminus: L-cysteine desulfhydrase-like protein lolT2 (464 aa).

At lysine 227 the chain carries N6-(pyridoxal phosphate)lysine.

Belongs to the class-V pyridoxal-phosphate-dependent aminotransferase family. It depends on pyridoxal 5'-phosphate as a cofactor.

It functions in the pathway alkaloid biosynthesis. In terms of biological role, L-cysteine desulfhydrase-like protein; part of the gene cluster that mediates the biosynthesis of loline alkaloids, potent insecticidal agents composed of a pyrrolizidine ring system and an uncommon ether bridge linking carbons 2 and 7. Lolines are structurally differentiated by the various modifications of the L-amino group and include norloline, loline, N-methylloline, N-acetylloline, N-acetylnorloline, and N-formylloline. The first committed step is the condensation of O-acetyl-L-homoserine (derived from L-aspartic acid) and L-proline, probably catalyzed by the gamma-type pyridoxal 5'-phosphate(PLP)-dependent enzyme lolC, to give the diamino diacid, NACPP. Ensuing cyclization, decarboxylation, and acetylation steps yield 1-exo-acetamidopyrrolizidine (AcAP). LolO is required for installation of the ether bridge upon the pathway intermediate, 1-exo-acetamidopyrrolizidine (AcAP). In sequential 2-oxoglutarate- and O(2)-consuming steps, lolO removes hydrogens from C2 and C7 of AcAP to form both carbon-oxygen bonds in N-acetylnorloline (NANL), the precursor to all other lolines. The enzymes lolD, lolE, lolF and lolT have also been proposed to be involved in the ether-bridge installation. Further processing of the exocyclic moiety of NANL by fungal N-acetamidase (LolN), methyltransferase (LolM), and cytochrome P450 (LolP) enzymes, with occasional involvement of a plant acetyltransferase, generates the other known lolines. LolN transforms NANL to norlonine which is monomethylated and dimethylated to respectively lonine and N-methyllonine (NML) by lolM. LolP catalyzes hydroxylation of the methyl group in N-methylloline (NML) and further oxygenation to N-formylloline (NFL). A plant acetyltransferase is responsible for the acetylation of loline to form N-acetylloline (NAL). LolA might interact with aspartate kinase to prevent feedback inhibition of its activity by these end products and thereby promote production of L-homoserine from L-aspartate. This Epichloe uncinata (Endophyte fungus) protein is L-cysteine desulfhydrase-like protein lolT2.